A 335-amino-acid chain; its full sequence is MINSDNQKFSKIRFDWARDEILEILNYPLVDLMWEAQIIHRRFNEYKVQLASLFSVKTGGCEENCSYCSQSIYSSSQIKSHPQFEVEAVLNRAKTAKKEGADRFCMGWAWREIRDGKPFNSMLEMVKGVKELGMEACVTAGMLTDEQALRLADAGLTAYNHNLDTSPEYYKNIITTRTYQDRLETIKRVRNAGINVCCGGIIGLGENNGDRASLLEVLSNMNPHPESVPINSLVAIEGTGLEEKKEIDSIEMIRMIATARILMPKSKIRLSAGREKLTKEAQIICFQCGANSIFYGDELLTTSNPSFQDDRKLLKDVGVLFNKDFEYCDKTVSTV.

The 229-residue stretch at tyrosine 46 to arginine 274 folds into the Radical SAM core domain. Residues cysteine 61, cysteine 65, and cysteine 68 each coordinate [4Fe-4S] cluster. [2Fe-2S] cluster contacts are provided by cysteine 105, cysteine 137, cysteine 197, and arginine 269.

It belongs to the radical SAM superfamily. Biotin synthase family. As to quaternary structure, homodimer. The cofactor is [4Fe-4S] cluster. [2Fe-2S] cluster is required as a cofactor.

It catalyses the reaction (4R,5S)-dethiobiotin + (sulfur carrier)-SH + 2 reduced [2Fe-2S]-[ferredoxin] + 2 S-adenosyl-L-methionine = (sulfur carrier)-H + biotin + 2 5'-deoxyadenosine + 2 L-methionine + 2 oxidized [2Fe-2S]-[ferredoxin]. It participates in cofactor biosynthesis; biotin biosynthesis; biotin from 7,8-diaminononanoate: step 2/2. In terms of biological role, catalyzes the conversion of dethiobiotin (DTB) to biotin by the insertion of a sulfur atom into dethiobiotin via a radical-based mechanism. The sequence is that of Biotin synthase from Prochlorococcus marinus (strain MIT 9515).